The following is a 249-amino-acid chain: ATP synthase subunit a, chloroplastic (249 aa).

The next 5 membrane-spanning stretches (helical) occupy residues 40 to 60 (QVLI…IVAV), 97 to 117 (VPFI…GALL), 136 to 156 (INTT…AGLS), 201 to 221 (LVVV…VMFL), and 222 to 242 (GLFT…AYIG).

Belongs to the ATPase A chain family. F-type ATPases have 2 components, CF(1) - the catalytic core - and CF(0) - the membrane proton channel. CF(1) has five subunits: alpha(3), beta(3), gamma(1), delta(1), epsilon(1). CF(0) has four main subunits: a, b, b' and c.

It is found in the plastid. It localises to the chloroplast thylakoid membrane. Key component of the proton channel; it plays a direct role in the translocation of protons across the membrane. The chain is ATP synthase subunit a, chloroplastic from Manihot esculenta (Cassava).